Reading from the N-terminus, the 215-residue chain is Imidazole glycerol phosphate synthase subunit HisH (215 aa).

The Glutamine amidotransferase type-1 domain occupies 7 to 215 (TIAVIDYGMG…LLKNFVEWQP (209 aa)). The active-site Nucleophile is the Cys86. Residues His195 and Glu197 contribute to the active site.

As to quaternary structure, heterodimer of HisH and HisF.

Its subcellular location is the cytoplasm. The catalysed reaction is 5-[(5-phospho-1-deoxy-D-ribulos-1-ylimino)methylamino]-1-(5-phospho-beta-D-ribosyl)imidazole-4-carboxamide + L-glutamine = D-erythro-1-(imidazol-4-yl)glycerol 3-phosphate + 5-amino-1-(5-phospho-beta-D-ribosyl)imidazole-4-carboxamide + L-glutamate + H(+). The enzyme catalyses L-glutamine + H2O = L-glutamate + NH4(+). Its pathway is amino-acid biosynthesis; L-histidine biosynthesis; L-histidine from 5-phospho-alpha-D-ribose 1-diphosphate: step 5/9. In terms of biological role, IGPS catalyzes the conversion of PRFAR and glutamine to IGP, AICAR and glutamate. The HisH subunit catalyzes the hydrolysis of glutamine to glutamate and ammonia as part of the synthesis of IGP and AICAR. The resulting ammonia molecule is channeled to the active site of HisF. This chain is Imidazole glycerol phosphate synthase subunit HisH, found in Dechloromonas aromatica (strain RCB).